The sequence spans 284 residues: Tropomyosin (284 aa).

Residues 1-284 (MDGIKKKMIA…DQTFAELTGY (284 aa)) are a coiled coil. Residues 111-131 (TKLEEASKTAEESERGRKDLE) are disordered.

The protein belongs to the tropomyosin family. In terms of assembly, homodimer.

Tropomyosin, in association with the troponin complex, plays a central role in the calcium dependent regulation of muscle contraction. The protein is Tropomyosin of Schistosoma haematobium (Blood fluke).